A 249-amino-acid chain; its full sequence is Methylthioribulose-1-phosphate dehydratase (249 aa).

2 residues coordinate Zn(2+): H103 and H105.

This sequence belongs to the aldolase class II family. MtnB subfamily. Zn(2+) serves as cofactor.

The catalysed reaction is 5-(methylsulfanyl)-D-ribulose 1-phosphate = 5-methylsulfanyl-2,3-dioxopentyl phosphate + H2O. The protein operates within amino-acid biosynthesis; L-methionine biosynthesis via salvage pathway; L-methionine from S-methyl-5-thio-alpha-D-ribose 1-phosphate: step 2/6. Its function is as follows. Catalyzes the dehydration of methylthioribulose-1-phosphate (MTRu-1-P) into 2,3-diketo-5-methylthiopentyl-1-phosphate (DK-MTP-1-P). The protein is Methylthioribulose-1-phosphate dehydratase of Leptospira interrogans serogroup Icterohaemorrhagiae serovar copenhageni (strain Fiocruz L1-130).